A 368-amino-acid chain; its full sequence is V-type proton ATPase subunit C (368 aa).

Belongs to the V-ATPase C subunit family. V-ATPase is a heteromultimeric enzyme composed of a peripheral catalytic V1 complex (components A to H) attached to an integral membrane V0 proton pore complex (components: a, c, c', c'' and d).

Its function is as follows. Subunit of the peripheral V1 complex of vacuolar ATPase. Subunit C is necessary for the assembly of the catalytic sector of the enzyme and is likely to have a specific function in its catalytic activity. V-ATPase is responsible for acidifying a variety of intracellular compartments in eukaryotic cells. The sequence is that of V-type proton ATPase subunit C (vatC) from Dictyostelium discoideum (Social amoeba).